A 485-amino-acid polypeptide reads, in one-letter code: Zinc finger protein 639 (485 aa).

Basic residues predominate over residues 1-14 (MNEYPKKRKRKTLH). The segment at 1 to 20 (MNEYPKKRKRKTLHPSRYSD) is disordered. Serine 60 is subject to Phosphoserine. Lysine 76 participates in a covalent cross-link: Glycyl lysine isopeptide (Lys-Gly) (interchain with G-Cter in SUMO2). Serine 88 is subject to Phosphoserine. Residues lysine 177, lysine 181, and lysine 226 each participate in a glycyl lysine isopeptide (Lys-Gly) (interchain with G-Cter in SUMO2) cross-link. 8 consecutive C2H2-type zinc fingers follow at residues 204–227 (YKCELCEFNSKYFSDLKQHMILKH), 233–255 (NVCRVCKESFSTNMLLIEHAKLH), 260–283 (YICKYCDYKTVIFENLSQHIADTH), 289–311 (YWCEQCDVQFSSSSELYLHFQEH), 374–397 (FVCQVCGFRSRLHTNVNRHVAIEH), 403–425 (HVCDDCGKGFSSMLEYCKHLNSH), 431–454 (YLCQYCEYSTGQIEDLKIHLDFKH), and 460–482 (HKCSDCLMRFGNERELISHLPVH). Residues 371-455 (KNFFVCQVCG…LKIHLDFKHS (85 aa)) form an interaction with CTNNA2 region.

Belongs to the krueppel C2H2-type zinc-finger protein family. Interacts with CTNNA2.

The protein resides in the nucleus. Its function is as follows. Binds DNA and may function as a transcriptional repressor. In Homo sapiens (Human), this protein is Zinc finger protein 639 (ZNF639).